Here is a 131-residue protein sequence, read N- to C-terminus: Cystatin J (131 aa).

The N-terminal stretch at 1–18 is a signal peptide; sequence MHLYLCVLVCLSIGMANC. In terms of domain architecture, Cystatin spans 35–109; that stretch reads DEILLTGVEF…RMNLPTKCSF (75 aa). Positions 68 to 72 match the Secondary area of contact motif; it reads QVVAG. Intrachain disulfides connect C86-C97 and C107-C128.

It belongs to the cystatin family.

It is found in the secreted. Its subcellular location is the nematocyst. Functionally, this recombinant protein inhibits the C1 cysteine protease papain (Ki is below 0.5 nM). The sequence is that of Cystatin J from Cyanea capillata (Lion's mane jellyfish).